The following is a 211-amino-acid chain: MTRGKLITFEGPDGAGKTTVLERLVPLLQAALGQTIVTTREPGGVAIAEKIRQLILDVSHTTMDDKTELLLYIAARRQHLVEKIMPALEAGHLVLVDRFIDSSVAYQGAGRGLDKQAIQWLNHFATDGVDPDLTLYFDVPSELGLARIAQNTEREVNRLDLEQLDLHQRVRKGYLELALENPQRIVKIDASQDLESVVAAALAAIITHSQA.

Residue Gly11–Thr18 participates in ATP binding.

The protein belongs to the thymidylate kinase family.

It catalyses the reaction dTMP + ATP = dTDP + ADP. Its function is as follows. Phosphorylation of dTMP to form dTDP in both de novo and salvage pathways of dTTP synthesis. This Streptococcus equi subsp. zooepidemicus (strain H70) protein is Thymidylate kinase.